A 171-amino-acid polypeptide reads, in one-letter code: Putative auxin-responsive protein IAA29 (171 aa).

One can recognise a PB1 domain in the interval 19–114 (SRFVKVFMHG…TVKKIYIVPA (96 aa)). Residues 117–171 (QNENDYQEEEEDNAAAAATADEDGDGAAADDGVAAAADDVDDVAGYTSNDDPSFD) form a disordered region. The span at 142-153 (GAAADDGVAAAA) shows a compositional bias: low complexity. Residues 162 to 171 (YTSNDDPSFD) show a composition bias toward polar residues.

This sequence belongs to the Aux/IAA family. As to quaternary structure, homodimers and heterodimers.

The protein localises to the nucleus. Functionally, aux/IAA proteins are short-lived transcriptional factors that function as repressors of early auxin response genes at low auxin concentrations. The protein is Putative auxin-responsive protein IAA29 (IAA29) of Oryza sativa subsp. japonica (Rice).